We begin with the raw amino-acid sequence, 526 residues long: MKSKSSLLKSGLLLSLLTLVSRVLGLAREVVKSTLMGTSATADAFTVAFMIPNLFRRLFAENAISVAFIPVFTQHYSMPSSAQVPCSSKTKEFLSAIFTLMSSVTASISLIGILGAPYIVRLFDTDQSLTVSLTRLMFPYLWMISLAAFFQGMLHSIKVFVPSGCTPIFFNVSVIFSMYFLNVSHMNVAIAAAIGVLIGGCAQALFQLIFVYMHGFRFTLQSPLKAMHDEGVRRIIALLLPTTVGIATYLLNDLVCTALATSVEIGVAASVQYSLRIQELLLGIFIVSLSSVVLPDLSFHVMRKDWQSFEDLLITAIKIVMLITIPATFFVLFSSDRIITLVYKNAIFNELSVRMTATIFRWHSVGMLAIALNRVLISAFYAQHNSFAPMIAGTISFVTNIILATLLFIPLGGKGIAFSLSAASMVQTVFLWMFLKRSWQITIPSLYKTSLYYGVKITLFSVIALVPTWASSFFTAYFFPGSHKIISHGVPLCVEALIFSCTGCILLLLSRDEFAYKALRSIRFCR.

Transmembrane regions (helical) follow at residues 35–55, 58–78, 96–116, 137–157, 160–180, 190–210, 235–255, 281–301, 313–333, 362–382, 391–411, 415–435, 459–479, and 489–509; these read LMGT…PNLF, LFAE…HYSM, AIFT…ILGA, MFPY…LHSI, FVPS…SMYF, IAAA…QLIF, IIAL…NDLV, LLGI…SFHV, LITA…FVLF, WHSV…AFYA, IAGT…FIPL, GIAF…WMFL, LFSV…AYFF, and GVPL…LLLL.

The protein belongs to the MurJ/MviN family.

Its subcellular location is the cell inner membrane. It participates in cell wall biogenesis; peptidoglycan biosynthesis. In terms of biological role, involved in peptidoglycan biosynthesis. Transports lipid-linked peptidoglycan precursors from the inner to the outer leaflet of the cytoplasmic membrane. This chain is Probable lipid II flippase MurJ, found in Treponema pallidum (strain Nichols).